Reading from the N-terminus, the 528-residue chain is Chaperonin GroEL, chloroplastic (528 aa).

Residues 29–32 (TLGP), 86–90 (DGTTT), glycine 414, and aspartate 496 contribute to the ATP site.

It belongs to the chaperonin (HSP60) family. In terms of assembly, forms a cylinder of 14 subunits composed of two heptameric rings stacked back-to-back. Interacts with the co-chaperonin GroES.

The protein localises to the plastid. It localises to the chloroplast. The catalysed reaction is ATP + H2O + a folded polypeptide = ADP + phosphate + an unfolded polypeptide.. In terms of biological role, together with its co-chaperonin GroES, plays an essential role in assisting protein folding. The GroEL-GroES system forms a nano-cage that allows encapsulation of the non-native substrate proteins and provides a physical environment optimized to promote and accelerate protein folding. The sequence is that of Chaperonin GroEL, chloroplastic from Gracilaria tenuistipitata var. liui (Red alga).